A 279-amino-acid polypeptide reads, in one-letter code: Protein phosphatase 1 regulatory subunit 3E (279 aa).

Ser16 and Ser33 each carry phosphoserine. Positions 28-89 are disordered; that stretch reads RSQRPSLEEE…RSPDTRKRVR (62 aa). Residues 51–65 show a composition bias toward basic residues; that stretch reads ARSRAHVPGRGRRAR. Residue Ser66 is modified to Phosphoserine. Positions 87–90 match the PP1-binding motif motif; sequence RVRF. Residues 154 to 259 enclose the CBM21 domain; that stretch reads AARLQAQRIC…NNGGRDYALL (106 aa). A glycogen-binding motif region spans residues 176 to 198; the sequence is GSARVLDLAYEKRVSVRWSADGW. Residues 248 to 256 form a substrate-binding motif region; it reads WDNNGGRDY.

As to expression, expressed in liver and heart, with low levels in skeletal muscle.

Functionally, acts as a glycogen-targeting subunit for PP1. PP1 is involved in glycogen metabolism and contributes to the activation of glycogen synthase leading to an increase in glycogen synthesis. This chain is Protein phosphatase 1 regulatory subunit 3E (Ppp1r3e), found in Rattus norvegicus (Rat).